The chain runs to 29 residues: Glucagon (29 aa).

Belongs to the glucagon family.

The protein localises to the secreted. Promotes hydrolysis of glycogen and lipids, and raises the blood sugar level. In Torpedo marmorata (Marbled electric ray), this protein is Glucagon (gcg).